The sequence spans 159 residues: Ribosomal RNA large subunit methyltransferase H (159 aa).

S-adenosyl-L-methionine-binding positions include leucine 76, glycine 108, and 127 to 132 (FSPMTF).

It belongs to the RNA methyltransferase RlmH family. Homodimer.

It is found in the cytoplasm. It carries out the reaction pseudouridine(1915) in 23S rRNA + S-adenosyl-L-methionine = N(3)-methylpseudouridine(1915) in 23S rRNA + S-adenosyl-L-homocysteine + H(+). Its function is as follows. Specifically methylates the pseudouridine at position 1915 (m3Psi1915) in 23S rRNA. In Alkaliphilus metalliredigens (strain QYMF), this protein is Ribosomal RNA large subunit methyltransferase H.